The following is a 190-amino-acid chain: MKQILDFIPLIVFFALYKMYDIYVATGALIVATAIQIVLTFALYKKVEKMQLITFAMVAIFGGMTIFLHDENFIKWKVTIVYAIFAIGLAVSHAMGKSAIKGMLGKEITLPDAIWTKINWAWVAFFSFCAGLNVYVAFELPLDVWVNFKVFGLLIATFAYMIATGFYIYKHMPKEQKEQKEKSSDVSLDD.

5 consecutive transmembrane segments (helical) span residues 22–42 (IYVA…LTFA), 50–70 (MQLI…FLHD), 76–96 (WKVT…HAMG), 118–138 (INWA…YVAF), and 148–168 (FKVF…GFYI).

It belongs to the YciB family.

Its subcellular location is the cell inner membrane. Its function is as follows. Plays a role in cell envelope biogenesis, maintenance of cell envelope integrity and membrane homeostasis. This Vibrio campbellii (strain ATCC BAA-1116) protein is Inner membrane-spanning protein YciB.